A 902-amino-acid polypeptide reads, in one-letter code: Tiger protein B1 (902 aa).

Residues 1-24 (MKVIYIYLLLLLVCKFLFVKSSCS) form the signal peptide. Residues 25–803 (LKVGKIECTK…IIYSENKSTG (779 aa)) are Extracellular-facing. N-linked (GlcNAc...) asparagine glycans are attached at residues N43, N144, N184, N223, N272, N279, N288, N358, N389, N398, N437, N559, N628, N644, N706, N753, N764, N771, and N799. Residues 249-323 (MEGVLNDNGG…ITIDGEYKSN (75 aa)) enclose the IPT/TIG 1 domain. IPT/TIG domains are found at residues 603–680 (PIIE…ISSS) and 704–788 (ITNT…IFQF). Residues 804–824 (FPNEMYLGFVVFVIFIALISF) form a helical membrane-spanning segment. At 825–902 (AAKNQIEKYF…IRRCFKEHTD (78 aa)) the chain is on the cytoplasmic side.

The protein localises to the cell membrane. In terms of biological role, tgrB1 and tgrC1 are involved in kin discrimination. They play an essential role in aggregation and subsequent development. The polypeptide is Tiger protein B1 (tgrB1) (Dictyostelium discoideum (Social amoeba)).